Reading from the N-terminus, the 567-residue chain is Urease subunit alpha (567 aa).

In terms of domain architecture, Urease spans 129 to 567; the sequence is GGIDTHIHWI…LPMAQRYFLF (439 aa). Positions 134, 136, and 217 each coordinate Ni(2+). Lys-217 carries the N6-carboxylysine modification. Residue His-219 participates in substrate binding. Residues His-246 and His-272 each coordinate Ni(2+). His-320 functions as the Proton donor in the catalytic mechanism. Residue Asp-360 participates in Ni(2+) binding.

The protein belongs to the metallo-dependent hydrolases superfamily. Urease alpha subunit family. Heterotrimer of UreA (gamma), UreB (beta) and UreC (alpha) subunits. Three heterotrimers associate to form the active enzyme. The apoenzyme interacts with an accessory complex composed of UreD, UreF and UreG, which is required for the assembly of the nickel containing metallocenter of UreC. The UreE protein may also play a direct role as a metallochaperone in nickel transfer to the urease apoprotein. Ni cation serves as cofactor. Carboxylation allows a single lysine to coordinate two nickel ions.

Its subcellular location is the cytoplasm. The catalysed reaction is urea + 2 H2O + H(+) = hydrogencarbonate + 2 NH4(+). It participates in nitrogen metabolism; urea degradation; CO(2) and NH(3) from urea (urease route): step 1/1. The apoenzyme can be activated in vitro in the presence of nickel ions and carbon dioxide, which promotes carboxylation of Lys-217. The sequence is that of Urease subunit alpha from Klebsiella aerogenes (Enterobacter aerogenes).